The primary structure comprises 563 residues: Arginine--tRNA ligase (563 aa).

Residues 120 to 130 (PNIAKPFHIGH) carry the 'HIGH' region motif.

This sequence belongs to the class-I aminoacyl-tRNA synthetase family. In terms of assembly, monomer.

The protein resides in the cytoplasm. It carries out the reaction tRNA(Arg) + L-arginine + ATP = L-arginyl-tRNA(Arg) + AMP + diphosphate. The polypeptide is Arginine--tRNA ligase (Clostridium botulinum (strain Okra / Type B1)).